Reading from the N-terminus, the 624-residue chain is DNA mismatch repair protein MutL (624 aa).

It belongs to the DNA mismatch repair MutL/HexB family.

This protein is involved in the repair of mismatches in DNA. It is required for dam-dependent methyl-directed DNA mismatch repair. May act as a 'molecular matchmaker', a protein that promotes the formation of a stable complex between two or more DNA-binding proteins in an ATP-dependent manner without itself being part of a final effector complex. This is DNA mismatch repair protein MutL from Xanthomonas campestris pv. campestris (strain B100).